The following is a 404-amino-acid chain: E3 ubiquitin-protein ligase RNF128 (404 aa).

The N-terminal stretch at 1–31 (MGALKMRCQCFPLPYLSLLALLLLNLSLTRA) is a signal peptide. The 105-residue stretch at 62 to 166 (DSPIERAAGL…LKGNEIVDLI (105 aa)) folds into the PA domain. Residues 191-211 (IFFVSVSFFIVTAATVGYFIF) traverse the membrane as a helical segment. The RING-type; atypical zinc finger occupies 260-301 (CAVCIEPYKPSDVVRILTCNHFFHKNCIDPWLLEHRTCPMCK). The interval 336 to 356 (ITEEENHSETASSGYASVRGG) is disordered.

Post-translationally, auto-ubiquitinated. Expressed in the cement gland, cranial placodes, and the pronephros.

The protein resides in the endomembrane system. The protein localises to the cytoplasm. It localises to the perinuclear region. The enzyme catalyses S-ubiquitinyl-[E2 ubiquitin-conjugating enzyme]-L-cysteine + [acceptor protein]-L-lysine = [E2 ubiquitin-conjugating enzyme]-L-cysteine + N(6)-ubiquitinyl-[acceptor protein]-L-lysine.. It participates in protein modification; protein ubiquitination. E3 ubiquitin-protein ligase that catalyzes polyubiquitin chains. Converts epidermis into cement gland and neural tissue in whole embryos. This Xenopus laevis (African clawed frog) protein is E3 ubiquitin-protein ligase RNF128 (rnf128).